The primary structure comprises 557 residues: Transcription factor fil1 (557 aa).

Residues 234 to 258 form a disordered region; the sequence is SPVKRELNDSTSPSKLSESSSSLTG. The segment covering 243–258 has biased composition (low complexity); sequence STSPSKLSESSSSLTG. 2 GATA-type zinc fingers span residues 365–390 and 419–443; these read CFNCGVTETPLWRRTSDKLNFLCNAC and CANCSSTKTSLWRKDRHGQTVCNAC.

Its subcellular location is the nucleus. It is found in the cytoplasm. Activates genes required for amino acid biosynthesis and acts as a master transcriptional regulator during amino acid starvation. Binds variations of the DNA sequence 5'-GAT[AC]GC-3'. The chain is Transcription factor fil1 from Schizosaccharomyces pombe (strain 972 / ATCC 24843) (Fission yeast).